Here is a 95-residue protein sequence, read N- to C-terminus: Large ribosomal subunit protein bL25 (95 aa).

It belongs to the bacterial ribosomal protein bL25 family. In terms of assembly, part of the 50S ribosomal subunit; part of the 5S rRNA/L5/L18/L25 subcomplex. Contacts the 5S rRNA. Binds to the 5S rRNA independently of L5 and L18.

This is one of the proteins that binds to the 5S RNA in the ribosome where it forms part of the central protuberance. The sequence is that of Large ribosomal subunit protein bL25 from Actinobacillus pleuropneumoniae serotype 3 (strain JL03).